The sequence spans 559 residues: DnaJ homolog subfamily C member 11 (559 aa).

Position 2 is an N-acetylalanine (A2). In terms of domain architecture, J spans 14–82; sequence DYYSLLNVRR…QTRAIYDIYG (69 aa). A Phosphoserine modification is found at S204. Residues 418–457 adopt a coiled-coil conformation; the sequence is KELEKQRESTATDILQKKQEAEAAVRLMQESVRRIIEAEE.

It belongs to the DNAJC11 family. Associates with the mitochondrial contact site and cristae organizing system (MICOS) complex, composed of at least MICOS10/MIC10, CHCHD3/MIC19, CHCHD6/MIC25, APOOL/MIC27, IMMT/MIC60, APOO/MIC23/MIC26 and QIL1/MIC13. This complex was also known under the names MINOS or MitOS complex. The MICOS complex associates with mitochondrial outer membrane proteins SAMM50, MTX1 and MTX2 (together described as components of the mitochondrial outer membrane sorting assembly machinery (SAM) complex) and DNAJC11, mitochondrial inner membrane protein TMEM11 and with HSPA9. The MICOS and SAM complexes together with DNAJC11 are part of a large protein complex spanning both membranes termed the mitochondrial intermembrane space bridging (MIB) complex.

It localises to the mitochondrion. It is found in the mitochondrion outer membrane. In terms of biological role, required for mitochondrial inner membrane organization. Seems to function through its association with the MICOS complex and the mitochondrial outer membrane sorting assembly machinery (SAM) complex. This Bos taurus (Bovine) protein is DnaJ homolog subfamily C member 11 (DNAJC11).